The primary structure comprises 454 residues: Mitochondrial dynamics protein MID49 (454 aa).

Topologically, residues 1 to 22 (MAEFSQKRGKRRSDEGLGSMVD) are mitochondrial intermembrane. Residue S13 is modified to Phosphoserine. Residues 23–43 (FLLANARLVLGVGGAAVLGIA) form a helical membrane-spanning segment. At 44–454 (TLAVKRFIDR…SGLQEPEGLL (411 aa)) the chain is on the cytoplasmic side. A disordered region spans residues 76–119 (ATPHLQPRPPPAALSQPVLPLAPSSSAPEGPAETDPEVTPQLSS). A compositionally biased stretch (low complexity) spans 88–103 (ALSQPVLPLAPSSSAP).

It belongs to the MID49/MID51 family. Interacts with DNM1L. As to expression, expressed in all tissues tested with highest expression in heart and skeletal muscle.

Its subcellular location is the mitochondrion outer membrane. In terms of biological role, mitochondrial outer membrane protein involved in the regulation of mitochondrial organization. It is required for mitochondrial fission and promotes the recruitment and association of the fission mediator dynamin-related protein 1 (DNM1L) to the mitochondrial surface independently of the mitochondrial fission FIS1 and MFF proteins. Regulates DNM1L GTPase activity. The chain is Mitochondrial dynamics protein MID49 (MIEF2) from Homo sapiens (Human).